The following is a 182-amino-acid chain: Phospholipase A2 inhibitor gamma subunit A (182 aa).

8 cysteine pairs are disulfide-bonded: Cys-3/Cys-27, Cys-6/Cys-13, Cys-20/Cys-48, Cys-54/Cys-75, Cys-76/Cys-81, Cys-99/Cys-124, Cys-117/Cys-146, and Cys-150/Cys-172. N-linked (GlcNAc...) asparagine glycosylation is present at Asn-157.

It belongs to the CNF-like-inhibitor family. As to quaternary structure, heterotrimer of 2 subunits A and 1 subunit B. Post-translationally, N-glycosylation is not important for activity, since deglycosylation does not change its PLA2 inhibitory activity. In terms of tissue distribution, expressed by the liver.

It localises to the secreted. Functionally, strongly inhibits its own venom PLA2 and all other PLA2s tested including Elapid, Crotalid and Viperid venom PLA2s, as well as honeybee PLA2s. The sequence is that of Phospholipase A2 inhibitor gamma subunit A from Laticauda semifasciata (Black-banded sea krait).